A 428-amino-acid polypeptide reads, in one-letter code: Serine--tRNA ligase (428 aa).

235–237 (TAE) contributes to the L-serine binding site. 266-268 (RYE) lines the ATP pocket. E289 lines the L-serine pocket. 353 to 356 (EVSS) lines the ATP pocket. Residue S389 participates in L-serine binding.

This sequence belongs to the class-II aminoacyl-tRNA synthetase family. Type-1 seryl-tRNA synthetase subfamily. In terms of assembly, homodimer. The tRNA molecule binds across the dimer.

The protein resides in the cytoplasm. It carries out the reaction tRNA(Ser) + L-serine + ATP = L-seryl-tRNA(Ser) + AMP + diphosphate + H(+). The catalysed reaction is tRNA(Sec) + L-serine + ATP = L-seryl-tRNA(Sec) + AMP + diphosphate + H(+). It participates in aminoacyl-tRNA biosynthesis; selenocysteinyl-tRNA(Sec) biosynthesis; L-seryl-tRNA(Sec) from L-serine and tRNA(Sec): step 1/1. Its function is as follows. Catalyzes the attachment of serine to tRNA(Ser). Is also able to aminoacylate tRNA(Sec) with serine, to form the misacylated tRNA L-seryl-tRNA(Sec), which will be further converted into selenocysteinyl-tRNA(Sec). The sequence is that of Serine--tRNA ligase from Blochmanniella pennsylvanica (strain BPEN).